The primary structure comprises 686 residues: tRNA 5-methylaminomethyl-2-thiouridine biosynthesis bifunctional protein MnmC (686 aa).

Positions 1–258 (MPNIPLRVNS…RRALRRQQLD (258 aa)) are tRNA (mnm(5)s(2)U34)-methyltransferase. Positions 276 to 686 (IGGGVASANL…MRKLIKGKAL (411 aa)) are FAD-dependent cmnm(5)s(2)U34 oxidoreductase.

It in the N-terminal section; belongs to the methyltransferase superfamily. tRNA (mnm(5)s(2)U34)-methyltransferase family. The protein in the C-terminal section; belongs to the DAO family. Requires FAD as cofactor.

It localises to the cytoplasm. The catalysed reaction is 5-aminomethyl-2-thiouridine(34) in tRNA + S-adenosyl-L-methionine = 5-methylaminomethyl-2-thiouridine(34) in tRNA + S-adenosyl-L-homocysteine + H(+). Catalyzes the last two steps in the biosynthesis of 5-methylaminomethyl-2-thiouridine (mnm(5)s(2)U) at the wobble position (U34) in tRNA. Catalyzes the FAD-dependent demodification of cmnm(5)s(2)U34 to nm(5)s(2)U34, followed by the transfer of a methyl group from S-adenosyl-L-methionine to nm(5)s(2)U34, to form mnm(5)s(2)U34. This chain is tRNA 5-methylaminomethyl-2-thiouridine biosynthesis bifunctional protein MnmC, found in Shewanella loihica (strain ATCC BAA-1088 / PV-4).